Consider the following 158-residue polypeptide: FUN14 domain-containing protein 1 (158 aa).

Positions 21–24 (YEVV) match the YXXL motif. 2 helical membrane-spanning segments follow: residues 51-70 (YSVT…AGYL) and 77-98 (IAAT…SGYV).

This sequence belongs to the FUN14 family.

The protein resides in the mitochondrion outer membrane. In terms of biological role, acts as an activator of hypoxia-induced mitophagy, an important mechanism for mitochondrial quality control. The sequence is that of FUN14 domain-containing protein 1 (fundc1) from Tetraodon nigroviridis (Spotted green pufferfish).